The primary structure comprises 389 residues: GTPase Obg (389 aa).

An Obg domain is found at 1–159 (MKFVDEAVIR…RSLKLELLLL (159 aa)). Positions 160 to 333 (ADVGLLGMPN…LALKLLDYIA (174 aa)) constitute an OBG-type G domain. Residues 166–173 (GMPNAGKS), 191–195 (FTTLV), 213–216 (DIPG), 283–286 (NKTD), and 314–316 (SAY) contribute to the GTP site. Residues Ser-173 and Thr-193 each contribute to the Mg(2+) site.

This sequence belongs to the TRAFAC class OBG-HflX-like GTPase superfamily. OBG GTPase family. Monomer. It depends on Mg(2+) as a cofactor.

It is found in the cytoplasm. In terms of biological role, an essential GTPase which binds GTP, GDP and possibly (p)ppGpp with moderate affinity, with high nucleotide exchange rates and a fairly low GTP hydrolysis rate. Plays a role in control of the cell cycle, stress response, ribosome biogenesis and in those bacteria that undergo differentiation, in morphogenesis control. The sequence is that of GTPase Obg from Shewanella baltica (strain OS223).